We begin with the raw amino-acid sequence, 467 residues long: Gamma-aminobutyric acid receptor subunit rho-3 (467 aa).

The signal sequence occupies residues 1–24; it reads MVLAFQLVSFTYIWIILKPNVCAA. The Extracellular segment spans residues 25 to 266; it reads SNIKMTHQRC…LFINFVLRRH (242 aa). 4-aminobutanoate-binding residues include arginine 111 and serine 175. The cysteines at positions 184 and 198 are disulfide-linked. Glutamate 203 lines the 4-aminobutanoate pocket. Asparagine 220 is a glycosylation site (N-linked (GlcNAc...) asparagine). A helical membrane pass occupies residues 267–287; it reads VFFFVLQTYFPAILMVMLSWV. Residues 288-299 lie on the Cytoplasmic side of the membrane; the sequence is SFWIDRRAVPAR. A helical membrane pass occupies residues 300–320; it reads VSLGITTVLTMSTIITAVSAS. The Extracellular portion of the chain corresponds to 321–331; the sequence is MPQVSYLKAVD. The chain crosses the membrane as a helical span at residues 332 to 352; it reads VYLWVSSLFVFLSVIEYAAVN. An interaction with SQSTM1 region spans residues 347–448; it reads EYAAVNYLTT…NNHVIDTYSR (102 aa). The Cytoplasmic portion of the chain corresponds to 353-446; that stretch reads YLTTVEERKQ…LENNHVIDTY (94 aa). The chain crosses the membrane as a helical span at residues 447-467; that stretch reads SRILFPIVYILFNLFYWGVYV.

Belongs to the ligand-gated ion channel (TC 1.A.9) family. Gamma-aminobutyric acid receptor (TC 1.A.9.5) subfamily. GABRR3 sub-subfamily. In terms of assembly, three rho subunits (rho-1/GBRR1, rho-2/GBRR2 and rho-3/GBRR3) coassemble either to form functional homopentamers or heteropentamers. Forms a ternary complex with SQSTM1 and PRKCZ.

The protein localises to the postsynaptic cell membrane. Its subcellular location is the cell membrane. It carries out the reaction chloride(in) = chloride(out). Its activity is regulated as follows. Inhibited by TPMPA, a rho-specific antagonist, when forming a homopentamer. Functionally, rho subunit of the pentameric ligand-gated chloride channels responsible for mediating the effects of gamma-aminobutyric acid (GABA), the major inhibitory neurotransmitter in the brain. Rho-containing GABA-gated chloride channels are a subclass of GABA(A) receptors (GABAARs) entirely composed of rho subunits, where GABA molecules bind at the rho intersubunit interfaces. When activated by GABA, rho-GABAARs selectively allow the flow of chloride anions across the cell membrane down their electrochemical gradient. The polypeptide is Gamma-aminobutyric acid receptor subunit rho-3 (Homo sapiens (Human)).